The sequence spans 389 residues: Urotensin-2 receptor (389 aa).

Composition is skewed to polar residues over residues 1 to 10 (MALTPESPSS) and 28 to 39 (PNATLNSSWASP). The disordered stretch occupies residues 1 to 39 (MALTPESPSSFPGLAAIGSSVPEPPGSPNATLNSSWASP). Topologically, residues 1-54 (MALTPESPSSFPGLAAIGSSVPEPPGSPNATLNSSWASPTEPSSLEDLVATGAI) are extracellular. 2 N-linked (GlcNAc...) asparagine glycosylation sites follow: N29 and N33. A helical transmembrane segment spans residues 55-77 (GTLLSAMGVVGVVGNAYTLVVTC). Residues 78–87 (RSLRAVASMY) lie on the Cytoplasmic side of the membrane. Residues 88-113 (IYVVNLALADLLYLLSIPFIVATYIT) form a helical membrane-spanning segment. Residues 114 to 124 (KEWHFGDVGCR) lie on the Extracellular side of the membrane. An intrachain disulfide couples C123 to C199. A helical transmembrane segment spans residues 125 to 146 (VLFSLDFLTMHASIFTLTVMSS). Topologically, residues 147–167 (ERYAAVLRPLDTVQRPKGYRK) are cytoplasmic. Residues 168–186 (LLALGTWLLALLLTLPVML) form a helical membrane-spanning segment. Over 187–209 (AMRLVRRGPKSLCLPAWGPRAHR) the chain is Extracellular. A helical transmembrane segment spans residues 210–232 (AYLTLLFATSIAGPGLLIGLLYA). Residues 233 to 258 (RLARAYRRSQRASFKRARRPGARALR) lie on the Cytoplasmic side of the membrane. A helical membrane pass occupies residues 259–284 (LVLGIVLLFWACFLPFWLWQLLAQYR). Topologically, residues 285–297 (EAPLAPRTARIVN) are extracellular. The chain crosses the membrane as a helical span at residues 298 to 318 (YLTTCLTYGNSCANPFLYTLL). The Cytoplasmic portion of the chain corresponds to 319–389 (TRNYRDHLRG…PALESPGDPA (71 aa)). Residues 328–366 (GRVRSPGSGGVRGPVPSLQPRARFQRGSGRSLSSCSPQP) form a disordered region. Positions 355–366 (SGRSLSSCSPQP) are enriched in polar residues.

The protein belongs to the G-protein coupled receptor 1 family.

The protein localises to the cell membrane. High affinity receptor for urotensin-2 and urotensin-2B. The activity of this receptor is mediated by a G-protein that activate a phosphatidylinositol-calcium second messenger system. In Macaca mulatta (Rhesus macaque), this protein is Urotensin-2 receptor (UTS2R).